A 92-amino-acid polypeptide reads, in one-letter code: Small ribosomal subunit protein bS20 (92 aa).

It belongs to the bacterial ribosomal protein bS20 family.

Binds directly to 16S ribosomal RNA. The polypeptide is Small ribosomal subunit protein bS20 (Rickettsia africae (strain ESF-5)).